The sequence spans 294 residues: Segregation and condensation protein A (294 aa).

The protein belongs to the ScpA family. In terms of assembly, component of a cohesin-like complex composed of ScpA, ScpB and the Smc homodimer, in which ScpA and ScpB bind to the head domain of Smc. The presence of the three proteins is required for the association of the complex with DNA.

The protein resides in the cytoplasm. Its function is as follows. Participates in chromosomal partition during cell division. May act via the formation of a condensin-like complex containing Smc and ScpB that pull DNA away from mid-cell into both cell halves. This chain is Segregation and condensation protein A, found in Ureaplasma parvum serovar 3 (strain ATCC 700970).